Here is a 145-residue protein sequence, read N- to C-terminus: uncharacterized protein (145 aa).

A coiled-coil region spans residues M1 to R41. A disordered region spans residues M1–S91. The span at Q7–Q26 shows a compositional bias: low complexity. Basic and acidic residues predominate over residues S27–S42. Residues P43–T58 are compositionally biased toward low complexity.

This is an uncharacterized protein from Dictyostelium discoideum (Social amoeba).